We begin with the raw amino-acid sequence, 217 residues long: Small ribosomal subunit protein uS3 (217 aa).

The KH type-2 domain occupies 38 to 106 (IRKFIQKELA…QVHINIIEIK (69 aa)).

This sequence belongs to the universal ribosomal protein uS3 family. Part of the 30S ribosomal subunit. Forms a tight complex with proteins S10 and S14.

In terms of biological role, binds the lower part of the 30S subunit head. Binds mRNA in the 70S ribosome, positioning it for translation. The sequence is that of Small ribosomal subunit protein uS3 from Streptococcus uberis (strain ATCC BAA-854 / 0140J).